Reading from the N-terminus, the 430-residue chain is Serine--tRNA ligase (430 aa).

235 to 237 contacts L-serine; the sequence is TSE. 266 to 268 serves as a coordination point for ATP; it reads RSE. L-serine is bound at residue E289. 353-356 is a binding site for ATP; it reads EISS. S388 contributes to the L-serine binding site.

This sequence belongs to the class-II aminoacyl-tRNA synthetase family. Type-1 seryl-tRNA synthetase subfamily. As to quaternary structure, homodimer. The tRNA molecule binds across the dimer.

The protein resides in the cytoplasm. It catalyses the reaction tRNA(Ser) + L-serine + ATP = L-seryl-tRNA(Ser) + AMP + diphosphate + H(+). The catalysed reaction is tRNA(Sec) + L-serine + ATP = L-seryl-tRNA(Sec) + AMP + diphosphate + H(+). The protein operates within aminoacyl-tRNA biosynthesis; selenocysteinyl-tRNA(Sec) biosynthesis; L-seryl-tRNA(Sec) from L-serine and tRNA(Sec): step 1/1. In terms of biological role, catalyzes the attachment of serine to tRNA(Ser). Is also able to aminoacylate tRNA(Sec) with serine, to form the misacylated tRNA L-seryl-tRNA(Sec), which will be further converted into selenocysteinyl-tRNA(Sec). This chain is Serine--tRNA ligase, found in Azoarcus sp. (strain BH72).